The primary structure comprises 594 residues: Alanine--tRNA ligase (594 aa).

Histidine 456, histidine 460, cysteine 558, and histidine 562 together coordinate Zn(2+).

It belongs to the class-II aminoacyl-tRNA synthetase family. Zn(2+) serves as cofactor.

Its subcellular location is the cytoplasm. It catalyses the reaction tRNA(Ala) + L-alanine + ATP = L-alanyl-tRNA(Ala) + AMP + diphosphate. Functionally, catalyzes the attachment of alanine to tRNA(Ala) in a two-step reaction: alanine is first activated by ATP to form Ala-AMP and then transferred to the acceptor end of tRNA(Ala). Also edits incorrectly charged Ser-tRNA(Ala) and Gly-tRNA(Ala) via its editing domain. The protein is Alanine--tRNA ligase (alaS) of Borreliella afzelii (strain PKo) (Borrelia afzelii).